Here is an 865-residue protein sequence, read N- to C-terminus: Protein translocase subunit SecA (865 aa).

ATP-binding positions include Q93, 111-115, and D501; that span reads GEGKT. Zn(2+) contacts are provided by C841, C843, C852, and C853.

This sequence belongs to the SecA family. Monomer and homodimer. Part of the essential Sec protein translocation apparatus which comprises SecA, SecYEG and auxiliary proteins SecDF-YajC and YidC. Zn(2+) is required as a cofactor.

The protein resides in the cell inner membrane. It localises to the cytoplasm. It catalyses the reaction ATP + H2O + cellular proteinSide 1 = ADP + phosphate + cellular proteinSide 2.. Functionally, part of the Sec protein translocase complex. Interacts with the SecYEG preprotein conducting channel. Has a central role in coupling the hydrolysis of ATP to the transfer of proteins into and across the cell membrane, serving as an ATP-driven molecular motor driving the stepwise translocation of polypeptide chains across the membrane. This chain is Protein translocase subunit SecA, found in Helicobacter pylori (strain Shi470).